The following is a 435-amino-acid chain: ATP-dependent RNA helicase RhlB (435 aa).

The short motif at 9–37 (QKFADLGLNPQVVEGLEKKGFEFCTPIQA) is the Q motif element. Residues 40 to 219 (LPVLLSGQDI…FEHMHNPEHV (180 aa)) enclose the Helicase ATP-binding domain. 53-60 (AQTGTGKT) lines the ATP pocket. Positions 165-168 (DEAD) match the DEAD box motif. Residues 245-390 (ALLQTLIEEE…VSDYDSSALI (146 aa)) form the Helicase C-terminal domain. A disordered region spans residues 395–435 (APVRTPSARNQQRRTNTGGARSGDRKSNNRRPRQPRQHKEA). Over residues 401-413 (SARNQQRRTNTGG) the composition is skewed to polar residues. A compositionally biased stretch (basic residues) spans 422-435 (NNRRPRQPRQHKEA).

The protein belongs to the DEAD box helicase family. RhlB subfamily. In terms of assembly, component of the RNA degradosome, which is a multiprotein complex involved in RNA processing and mRNA degradation.

The protein localises to the cytoplasm. It catalyses the reaction ATP + H2O = ADP + phosphate + H(+). In terms of biological role, DEAD-box RNA helicase involved in RNA degradation. Has RNA-dependent ATPase activity and unwinds double-stranded RNA. The chain is ATP-dependent RNA helicase RhlB from Vibrio vulnificus (strain CMCP6).